The chain runs to 871 residues: Alanine--tRNA ligase (871 aa).

Residues His-563, His-567, Cys-665, and His-669 each contribute to the Zn(2+) site.

The protein belongs to the class-II aminoacyl-tRNA synthetase family. Requires Zn(2+) as cofactor.

It localises to the cytoplasm. It carries out the reaction tRNA(Ala) + L-alanine + ATP = L-alanyl-tRNA(Ala) + AMP + diphosphate. Functionally, catalyzes the attachment of alanine to tRNA(Ala) in a two-step reaction: alanine is first activated by ATP to form Ala-AMP and then transferred to the acceptor end of tRNA(Ala). Also edits incorrectly charged Ser-tRNA(Ala) and Gly-tRNA(Ala) via its editing domain. In Christiangramia forsetii (strain DSM 17595 / CGMCC 1.15422 / KT0803) (Gramella forsetii), this protein is Alanine--tRNA ligase.